The sequence spans 632 residues: Bestrophin homolog 24 (632 aa).

Transmembrane regions (helical) follow at residues 28–48 (IWKA…ILSV), 83–103 (GFFV…IGFI), 234–254 (IMYP…CLLA), and 271–291 (LYFP…MKVA). Disordered regions lie at residues 491 to 516 (LSNK…EHPF) and 562 to 632 (ETEV…TKFE). The segment covering 563 to 602 (TEVKRDEKKKKEEELREEGDNGKEEKDNKEDKKEEQDRPS) has biased composition (basic and acidic residues). Basic residues predominate over residues 623 to 632 (PHLRPPTKFE).

The protein belongs to the anion channel-forming bestrophin (TC 1.A.46) family. Calcium-sensitive chloride channel subfamily. In terms of assembly, forms oligomers.

Its subcellular location is the cell membrane. Functionally, forms chloride channels. In Caenorhabditis elegans, this protein is Bestrophin homolog 24 (best-24).